A 297-amino-acid chain; its full sequence is tRNA dimethylallyltransferase (297 aa).

ATP is bound at residue 15-22 (GPTASGKS). 17–22 (TASGKS) is a binding site for substrate. Interaction with substrate tRNA regions lie at residues 40 to 43 (DSMQ) and 164 to 168 (QRIVR).

The protein belongs to the IPP transferase family. Monomer. Requires Mg(2+) as cofactor.

The catalysed reaction is adenosine(37) in tRNA + dimethylallyl diphosphate = N(6)-dimethylallyladenosine(37) in tRNA + diphosphate. Functionally, catalyzes the transfer of a dimethylallyl group onto the adenine at position 37 in tRNAs that read codons beginning with uridine, leading to the formation of N6-(dimethylallyl)adenosine (i(6)A). The polypeptide is tRNA dimethylallyltransferase (Rhizobium etli (strain CIAT 652)).